The following is a 688-amino-acid chain: Protein adenylyltransferase SelO, mitochondrial (688 aa).

A mitochondrion-targeting transit peptide spans 1–23 (MGEKRTIIKALKNSAASHFIKKL). 8 residues coordinate ATP: glycine 132, glycine 134, arginine 135, lysine 156, aspartate 168, glycine 169, arginine 220, and arginine 227. The Proton acceptor role is filled by aspartate 338. Asparagine 339 and aspartate 348 together coordinate Mg(2+). Aspartate 348 serves as a coordination point for ATP.

This sequence belongs to the SELO family. Requires Mg(2+) as cofactor. Forms probably one or more intrachain disulfide bridges.

The protein localises to the mitochondrion. The enzyme catalyses L-tyrosyl-[protein] + ATP = O-(5'-adenylyl)-L-tyrosyl-[protein] + diphosphate. Functionally, catalyzes the transfer of adenosine 5'-monophosphate (AMP) to Tyr residues of target mitochondrial proteins (AMPylation). Involved in redox homeostasis by regulating the cellular response to oxidative stress. Regulates protein S-glutathionylation levels possibly by AMPylation of deglutathionylation enzymes such as glutaredoxins. The protein is Protein adenylyltransferase SelO, mitochondrial of Saccharomyces cerevisiae (strain ATCC 204508 / S288c) (Baker's yeast).